Consider the following 197-residue polypeptide: HTH-type transcriptional regulator BetI (197 aa).

Residues 8-68 (PIRRQQLIQA…ATMRHLMNAL (61 aa)) form the HTH tetR-type domain. Positions 31–50 (SIALIARLAGVSNGIISHYF) form a DNA-binding region, H-T-H motif.

It functions in the pathway amine and polyamine biosynthesis; betaine biosynthesis via choline pathway [regulation]. Its function is as follows. Repressor involved in the biosynthesis of the osmoprotectant glycine betaine. It represses transcription of the choline transporter BetT and the genes of BetAB involved in the synthesis of glycine betaine. In Pseudomonas savastanoi pv. phaseolicola (strain 1448A / Race 6) (Pseudomonas syringae pv. phaseolicola (strain 1448A / Race 6)), this protein is HTH-type transcriptional regulator BetI.